The primary structure comprises 532 residues: Cocaine esterase (532 aa).

Glutamine 1 is modified (pyrrolidone carboxylic acid). A disulfide bridge links cysteine 69 with cysteine 96. Serine 201 functions as the Acyl-ester intermediate in the catalytic mechanism. Asparagine 249 carries an N-linked (GlcNAc...) asparagine glycan. Cysteine 253 and cysteine 264 are oxidised to a cystine. Active-site charge relay system residues include glutamate 318 and histidine 430. Residues 529 to 532 carry the Prevents secretion from ER motif; the sequence is HTEL.

It belongs to the type-B carboxylesterase/lipase family. As to quaternary structure, monomer.

It localises to the endoplasmic reticulum lumen. The enzyme catalyses a carboxylic ester + H2O = an alcohol + a carboxylate + H(+). It catalyses the reaction cocaine + H2O = ecgonine methyl ester + benzoate + H(+). The catalysed reaction is 2-(5Z,8Z,11Z,14Z-eicosatetraenoyl)-glycerol + H2O = glycerol + (5Z,8Z,11Z,14Z)-eicosatetraenoate + H(+). It carries out the reaction prostaglandin E2 1-glyceryl ester + H2O = prostaglandin E2 + glycerol + H(+). The enzyme catalyses prostaglandin F2alpha 1-glyceryl ester + H2O = prostaglandin F2alpha + glycerol + H(+). In terms of biological role, involved in the detoxification of xenobiotics and in the activation of ester and amide prodrugs. Converts monoacylglycerides to free fatty acids and glycerol. Hydrolyzes of 2-arachidonoylglycerol and prostaglandins. The protein is Cocaine esterase (CES2) of Oryctolagus cuniculus (Rabbit).